Reading from the N-terminus, the 245-residue chain is Probable phosphatase YcdX (245 aa).

Histidine 7, histidine 9, histidine 15, histidine 40, glutamate 73, histidine 101, histidine 131, aspartate 192, and histidine 194 together coordinate Zn(2+).

It belongs to the PHP family. Homotrimer. Zn(2+) is required as a cofactor.

The protein is Probable phosphatase YcdX of Escherichia fergusonii (strain ATCC 35469 / DSM 13698 / CCUG 18766 / IAM 14443 / JCM 21226 / LMG 7866 / NBRC 102419 / NCTC 12128 / CDC 0568-73).